A 258-amino-acid chain; its full sequence is Imidazole glycerol phosphate synthase subunit HisF (258 aa).

Residues D12 and D131 contribute to the active site.

The protein belongs to the HisA/HisF family. As to quaternary structure, heterodimer of HisH and HisF.

It is found in the cytoplasm. The catalysed reaction is 5-[(5-phospho-1-deoxy-D-ribulos-1-ylimino)methylamino]-1-(5-phospho-beta-D-ribosyl)imidazole-4-carboxamide + L-glutamine = D-erythro-1-(imidazol-4-yl)glycerol 3-phosphate + 5-amino-1-(5-phospho-beta-D-ribosyl)imidazole-4-carboxamide + L-glutamate + H(+). The protein operates within amino-acid biosynthesis; L-histidine biosynthesis; L-histidine from 5-phospho-alpha-D-ribose 1-diphosphate: step 5/9. IGPS catalyzes the conversion of PRFAR and glutamine to IGP, AICAR and glutamate. The HisF subunit catalyzes the cyclization activity that produces IGP and AICAR from PRFAR using the ammonia provided by the HisH subunit. This chain is Imidazole glycerol phosphate synthase subunit HisF, found in Paenarthrobacter aurescens (strain TC1).